Here is a 1206-residue protein sequence, read N- to C-terminus: Pre-mRNA-splicing factor prp12 (1206 aa).

This sequence belongs to the RSE1 family. In terms of assembly, belongs to the 40S cdc5-associated complex (or cwf complex), a spliceosome sub-complex reminiscent of a late-stage spliceosome composed of the U2, U5 and U6 snRNAs and at least brr2, cdc5, cwf2/prp3, cwf3/syf1, cwf4/syf3, cwf5/ecm2, spp42/cwf6, cwf7/spf27, cwf8, cwf9, cwf10, cwf11, cwf12, prp45/cwf13, cwf14, cwf15, cwf16, cwf17, cwf18, cwf19, cwf20, cwf21, cwf22, cwf23, cwf24, cwf25, cwf26, cyp7/cwf27, cwf28, cwf29/ist3, lea1, msl1, prp5/cwf1, prp10, prp12/sap130, prp17, prp22, sap61, sap62, sap114, sap145, slu7, smb1, smd1, smd3, smf1, smg1 and syf2.

It localises to the nucleus. Involved in mRNA splicing and G2/M transition. This is Pre-mRNA-splicing factor prp12 (prp12) from Schizosaccharomyces pombe (strain 972 / ATCC 24843) (Fission yeast).